Consider the following 163-residue polypeptide: Calcium-binding protein I (163 aa).

3 EF-hand domains span residues 20–42, 82–117, and 118–153; these read DKNKDRQYSIDEIVQLLKKNSKN, KPEIDIESFLLRFDKNNDKMISHHELKTKLDELGCG, and NSKKTTDYVFEQIDTNKEGSLSYEDLEGFVKFLKQD. Ca(2+)-binding residues include aspartate 95, asparagine 97, aspartate 99, methionine 101, glutamate 106, aspartate 131, asparagine 133, glutamate 135, serine 137, and aspartate 142.

The protein is Calcium-binding protein I (cbpI) of Dictyostelium discoideum (Social amoeba).